A 940-amino-acid polypeptide reads, in one-letter code: MSVSIGDKIEDFKVLTLLGKGSFACVYRAKSVNTGLEVAIKMIDKKAMHKAGMVQRVINEVEIQCRLKHPSVLELYNYFEDSNYVYLVLEMCHNGEMSRYLKERKNPFTEEEARHFMHQIVKGMLYLHTHGIMHRDLTLTNLLLTTSMNIKIADFGLATQLKLPSEKHFTMCGTPNYISPEVATRSAHGLESDVWSLGCMFYAFLTGRPPFDTDTVKRTLNKVVLGEYQMPMHISAEAQDLIQQLLQKNPALRPSLSAVLDHPFMTQSGPTASKDSGSSNGGSIDSGIATISTASNATNNSSSSRLQRRTRQMIGQPLPSRMAPIPSHSHHSTSSSFKSGQDWQPNSQDDLSRMGVGRIPVGADSGRPHSRYLRRAHSSDRSAVGYSHNPQEAELERCHSEEMLSGAGRLFPQTSGYRNAPHGYSKHDRLPSPPVKQPANPASSFSTSTHSTRQQMPDSQTQPWFSNDGVFKRPADMSGHSSSGSFHSERGPIGTQTSCSDKPSGLHSQQQPILFQHNNPGPCREDAFVSGHMSEPQAYSDAQFPCPPLSKGKANTEKKDKVCLKKSFPPLCAARLKPIRQKTKNAVVSILGNGEVCMELLKGQGAQERVKEVLRISCDGSMVTVYQPNEGKGFPVLDHPPSPPEDILICSFDDLPEKYWKKYQYATKFVQLVKSKTPKVTLYTKFAKCMLMENSPNPDLEVCFYDGAKTHKTSEQVRVVEKSGKSYTVKGDVGLSGLNPECRLYIELSEEGHRMCLSLEAAITAEEQRSAKNTPFFPITIGRRPVNPVPPAPAPSSSSSCRPAAAAEVAHVCLSPPQHPQITPSMISYAGSDLTTASVAKGSSPVHKDERTVNSGKVLKSIFVPNIGWVSQLTTGEVWVQFNDGSQLMVQVGVSCIIFTSPEGHITRYKENEKLPELVKEKLHCLSSILGLLANPAARC.

A Protein kinase domain is found at 12–265 (FKVLTLLGKG…LSAVLDHPFM (254 aa)). ATP is bound by residues 18-26 (LGKGSFACV) and Lys-41. The Proton acceptor role is filled by Asp-136. Disordered stretches follow at residues 262–353 (HPFM…DLSR) and 409–529 (RLFP…DAFV). Residues 273–305 (SKDSGSSNGGSIDSGIATISTASNATNNSSSSR) show a composition bias toward low complexity. Composition is skewed to polar residues over residues 337-349 (FKSG…NSQD), 440-465 (NPAS…QPWF), and 494-519 (GTQT…QHNN). Positions 563 to 676 (CLKKSFPPLC…TKFVQLVKSK (114 aa)) constitute a Cryptic POLO box 1 (CPB1) domain. Residues 677–791 (TPKVTLYTKF…GRRPVNPVPP (115 aa)) enclose the Cryptic POLO box 2 (CPB2) domain. The 79-residue stretch at 857–935 (KVLKSIFVPN…LSSILGLLAN (79 aa)) folds into the POLO box domain.

This sequence belongs to the protein kinase superfamily. Ser/Thr protein kinase family. CDC5/Polo subfamily. As to quaternary structure, homodimer. Ubiquitinated; leading to its degradation by the proteasome.

Its subcellular location is the cytoplasm. The protein resides in the cytoskeleton. It is found in the microtubule organizing center. The protein localises to the centrosome. It localises to the centriole. It catalyses the reaction L-seryl-[protein] + ATP = O-phospho-L-seryl-[protein] + ADP + H(+). It carries out the reaction L-threonyl-[protein] + ATP = O-phospho-L-threonyl-[protein] + ADP + H(+). Functionally, serine/threonine-protein kinase that plays a central role in centriole duplication. Able to trigger procentriole formation on the surface of the parental centriole cylinder, leading to the recruitment of centriole biogenesis proteins such as sass6, cpap, ccp110, cep135 and gamma-tubulin. When overexpressed, it is able to induce centrosome amplification through the simultaneous generation of multiple procentrioles adjoining each parental centriole during S phase. Its central role in centriole replication suggests a possible role in tumorigenesis, centrosome aberrations being frequently observed in tumors. Also involved in deuterosome-mediated centriole amplification in multiciliated that can generate more than 100 centrioles. In Danio rerio (Zebrafish), this protein is Serine/threonine-protein kinase PLK4.